We begin with the raw amino-acid sequence, 448 residues long: Zinc finger CCCH domain-containing protein 43 (448 aa).

The segment at 1 to 106 (MVNSEEIADG…GWSENESENV (106 aa)) is disordered. Basic and acidic residues predominate over residues 24 to 45 (SSHDRSLSDLNHAAEDLSDKLK). Residues 63-79 (VSESNGGLDSNAVVTIN) are compositionally biased toward polar residues. Over residues 80-89 (QEEEEEEEDR) the composition is skewed to acidic residues. 5 consecutive C3H1-type zinc fingers follow at residues 110 to 138 (RPGA…HPLA), 158 to 186 (KLGL…HTIP), 204 to 232 (RPGE…HPDP), 346 to 374 (RPDQ…HPKN), and 392 to 420 (RPDQ…HSVQ). The segment at 424–448 (STESSQAIVEPPQVSANGNESDGWN) is disordered. The segment covering 437 to 448 (VSANGNESDGWN) has biased composition (polar residues).

It is found in the nucleus. In Arabidopsis thaliana (Mouse-ear cress), this protein is Zinc finger CCCH domain-containing protein 43.